Reading from the N-terminus, the 45-residue chain is Large ribosomal subunit protein bL34 (45 aa).

The segment covering 1-10 has biased composition (basic and acidic residues); the sequence is MTKRTLEGTN. The disordered stretch occupies residues 1-27; that stretch reads MTKRTLEGTNRKRKRTSGFRARMRSAT. Positions 11 to 23 are enriched in basic residues; sequence RKRKRTSGFRARM.

It belongs to the bacterial ribosomal protein bL34 family.

The sequence is that of Large ribosomal subunit protein bL34 from Synechococcus elongatus (strain ATCC 33912 / PCC 7942 / FACHB-805) (Anacystis nidulans R2).